The following is a 345-amino-acid chain: Probable translocation protein y4yO (345 aa).

A compositionally biased stretch (basic and acidic residues) spans 1–22 (MSDTSEEKSHGATPKKLSDARK). The segment at 1-25 (MSDTSEEKSHGATPKKLSDARKRGQ) is disordered. 3 consecutive transmembrane segments (helical) span residues 87 to 107 (LATVGPLLSALFGAVILAALL), 151 to 171 (VLVLGGTFSLFFLGLWKTMVY), and 189 to 209 (QLIGIGAGALLIGGLIDLLLQ).

Belongs to the type III secretion exporter family.

The protein localises to the cell membrane. Could be involved in the secretion of an unknown factor. This chain is Probable translocation protein y4yO, found in Sinorhizobium fredii (strain NBRC 101917 / NGR234).